A 180-amino-acid chain; its full sequence is Pro-glucagon (180 aa).

The N-terminal stretch at 1 to 20 (MKSIYFVAGLFVMLVQGSWQ) is a signal peptide. The tract at residues 26 to 59 (TEEKSRSFSASQADPLSDPDQMNEDKRHSQGTFT) is disordered. The residue at position 54 (serine 54) is a Phosphoserine. Residues 84-89 (NRNNIA) constitute a propeptide that is removed on maturation. Residues serine 105 and serine 108 each carry the phosphoserine modification. Arginine amide is present on arginine 127. A propeptide spanning residues 131–145 (DFPEEVAIVEELGRR) is cleaved from the precursor. Phosphoserine occurs at positions 150 and 152.

Belongs to the glucagon family. Post-translationally, proglucagon is post-translationally processed in a tissue-specific manner in pancreatic A cells and intestinal L cells. In pancreatic A cells, the major bioactive hormone is glucagon cleaved by PCSK2/PC2. In the intestinal L cells PCSK1/PC1 liberates GLP-1, GLP-2, glicentin and oxyntomodulin. GLP-1 is further N-terminally truncated by post-translational processing in the intestinal L cells resulting in GLP-1(7-37) GLP-1-(7-36)amide. The C-terminal amidation is neither important for the metabolism of GLP-1 nor for its effects on the endocrine pancreas. As to expression, secreted in the A cells of the islets of Langerhans. Secreted in the A cells of the islets of Langerhans. Secreted from enteroendocrine L cells throughout the gastrointestinal tract. Also secreted in selected neurons in the brain. In terms of tissue distribution, secreted from enteroendocrine cells throughout the gastrointestinal tract. Also secreted in selected neurons in the brain. As to expression, secreted from enteroendocrine cells throughout the gastrointestinal tract.

The protein localises to the secreted. Its function is as follows. Plays a key role in glucose metabolism and homeostasis. Regulates blood glucose by increasing gluconeogenesis and decreasing glycolysis. A counterregulatory hormone of insulin, raises plasma glucose levels in response to insulin-induced hypoglycemia. Plays an important role in initiating and maintaining hyperglycemic conditions in diabetes. In terms of biological role, potent stimulator of glucose-dependent insulin release. Also stimulates insulin release in response to IL6. Plays important roles on gastric motility and the suppression of plasma glucagon levels. May be involved in the suppression of satiety and stimulation of glucose disposal in peripheral tissues, independent of the actions of insulin. Has growth-promoting activities on intestinal epithelium. May also regulate the hypothalamic pituitary axis (HPA) via effects on LH, TSH, CRH, oxytocin, and vasopressin secretion. Increases islet mass through stimulation of islet neogenesis and pancreatic beta cell proliferation. Inhibits beta cell apoptosis. Stimulates intestinal growth and up-regulates villus height in the small intestine, concomitant with increased crypt cell proliferation and decreased enterocyte apoptosis. The gastrointestinal tract, from the stomach to the colon is the principal target for GLP-2 action. Plays a key role in nutrient homeostasis, enhancing nutrient assimilation through enhanced gastrointestinal function, as well as increasing nutrient disposal. Stimulates intestinal glucose transport and decreases mucosal permeability. Functionally, significantly reduces food intake. Inhibits gastric emptying in humans. Suppression of gastric emptying may lead to increased gastric distension, which may contribute to satiety by causing a sensation of fullness. Its function is as follows. May modulate gastric acid secretion and the gastro-pyloro-duodenal activity. May play an important role in intestinal mucosal growth in the early period of life. The polypeptide is Pro-glucagon (Homo sapiens (Human)).